A 346-amino-acid polypeptide reads, in one-letter code: Magnesium-protoporphyrin IX monomethyl ester [oxidative] cyclase (346 aa).

The protein belongs to the AcsF family. Requires Fe cation as cofactor.

The enzyme catalyses Mg-protoporphyrin IX 13-monomethyl ester + 3 NADPH + 3 O2 + 2 H(+) = 3,8-divinyl protochlorophyllide a + 3 NADP(+) + 5 H2O. It functions in the pathway porphyrin-containing compound metabolism; chlorophyll biosynthesis (light-independent). Its function is as follows. Catalyzes the formation of the isocyclic ring in chlorophyll biosynthesis. Mediates the cyclase reaction, which results in the formation of divinylprotochlorophyllide (Pchlide) characteristic of all chlorophylls from magnesium-protoporphyrin IX 13-monomethyl ester (MgPMME). This Gloeobacter violaceus (strain ATCC 29082 / PCC 7421) protein is Magnesium-protoporphyrin IX monomethyl ester [oxidative] cyclase.